Here is a 234-residue protein sequence, read N- to C-terminus: Thiamine-phosphate synthase (234 aa).

Residues 65 to 69 (QYRNK) and Asn97 each bind 4-amino-2-methyl-5-(diphosphooxymethyl)pyrimidine. Mg(2+)-binding residues include Asp98 and Asp117. 4-amino-2-methyl-5-(diphosphooxymethyl)pyrimidine is bound at residue Ser136. 163–165 (SHT) provides a ligand contact to 2-[(2R,5Z)-2-carboxy-4-methylthiazol-5(2H)-ylidene]ethyl phosphate. Lys166 is a binding site for 4-amino-2-methyl-5-(diphosphooxymethyl)pyrimidine. 2-[(2R,5Z)-2-carboxy-4-methylthiazol-5(2H)-ylidene]ethyl phosphate-binding positions include Gly192 and 212 to 213 (IS).

This sequence belongs to the thiamine-phosphate synthase family. Requires Mg(2+) as cofactor.

The catalysed reaction is 2-[(2R,5Z)-2-carboxy-4-methylthiazol-5(2H)-ylidene]ethyl phosphate + 4-amino-2-methyl-5-(diphosphooxymethyl)pyrimidine + 2 H(+) = thiamine phosphate + CO2 + diphosphate. The enzyme catalyses 2-(2-carboxy-4-methylthiazol-5-yl)ethyl phosphate + 4-amino-2-methyl-5-(diphosphooxymethyl)pyrimidine + 2 H(+) = thiamine phosphate + CO2 + diphosphate. It catalyses the reaction 4-methyl-5-(2-phosphooxyethyl)-thiazole + 4-amino-2-methyl-5-(diphosphooxymethyl)pyrimidine + H(+) = thiamine phosphate + diphosphate. It participates in cofactor biosynthesis; thiamine diphosphate biosynthesis; thiamine phosphate from 4-amino-2-methyl-5-diphosphomethylpyrimidine and 4-methyl-5-(2-phosphoethyl)-thiazole: step 1/1. Functionally, condenses 4-methyl-5-(beta-hydroxyethyl)thiazole monophosphate (THZ-P) and 2-methyl-4-amino-5-hydroxymethyl pyrimidine pyrophosphate (HMP-PP) to form thiamine monophosphate (TMP). In Xylella fastidiosa (strain Temecula1 / ATCC 700964), this protein is Thiamine-phosphate synthase.